The primary structure comprises 307 residues: Ubiquinol oxidase subunit 2 (307 aa).

The first 23 residues, 1 to 23 (MKNKLLARVARLGGLSSALLLAG), serve as a signal peptide directing secretion. Cys24 carries the N-palmitoyl cysteine lipid modification. A lipid anchor (S-diacylglycerol cysteine) is attached at Cys24. Transmembrane regions (helical) follow at residues 46-66 (STVA…LFAW) and 87-107 (IEVT…VITY).

Belongs to the cytochrome c oxidase subunit 2 family. Heterotetramer of the subunits 1, 2, 3 and 4.

The protein resides in the cell membrane. The chain is Ubiquinol oxidase subunit 2 (cyaB) from Acetobacter aceti.